The following is a 281-amino-acid chain: Shikimate dehydrogenase (NADP(+)) (281 aa).

Shikimate is bound by residues serine 20 to serine 22 and threonine 67. The Proton acceptor role is filled by lysine 71. Aspartate 83 contacts NADP(+). Shikimate-binding residues include asparagine 92 and aspartate 108. NADP(+) contacts are provided by residues glycine 133 to alanine 137, asparagine 157 to arginine 162, and methionine 225. Tyrosine 227 serves as a coordination point for shikimate. Residue glycine 248 participates in NADP(+) binding.

It belongs to the shikimate dehydrogenase family. As to quaternary structure, homodimer.

The catalysed reaction is shikimate + NADP(+) = 3-dehydroshikimate + NADPH + H(+). It functions in the pathway metabolic intermediate biosynthesis; chorismate biosynthesis; chorismate from D-erythrose 4-phosphate and phosphoenolpyruvate: step 4/7. Involved in the biosynthesis of the chorismate, which leads to the biosynthesis of aromatic amino acids. Catalyzes the reversible NADPH linked reduction of 3-dehydroshikimate (DHSA) to yield shikimate (SA). The chain is Shikimate dehydrogenase (NADP(+)) from Paracidovorax citrulli (strain AAC00-1) (Acidovorax citrulli).